The following is a 576-amino-acid chain: uncharacterized protein (576 aa).

Composition is skewed to polar residues over residues 1–21 (MSTNPNAGIQPLTNSISQSAS) and 28–40 (HTTSHESVSTYQL). Positions 1–40 (MSTNPNAGIQPLTNSISQSASAHPELYHTTSHESVSTYQL) are disordered. Helical transmembrane passes span 149–169 (FASSVFSVPAEAITTIFHISL), 173–193 (LLTMTVFLCGYIAGPIVWAPL), 200–220 (KLPLLIGMFGFGIFNISVAVA), 231–251 (FFSGFFASAPLTVVAAAFADM), 261–281 (ITIFAALVFDGPLVSPIIGGF), 291–311 (WTEYITSFMGFFALVIVYLFC), 366–386 (PIVFLITLYSSFVYAILYLLL), 401–421 (MGVAELPYIGLLVGVFIGSAI), 446–466 (LPPMMIGCFMFPAGIFWLSWS), 472–492 (VHWIVPTLSGLATGCGILLIF), 503–525 (YLFRAASAVAANTIMRSAMAAGF), and 542–562 (GSLLGFIAVALIPMPFAFFFF).

The protein belongs to the major facilitator superfamily. CAR1 family.

It localises to the endoplasmic reticulum. The protein localises to the golgi apparatus. The protein resides in the membrane. This is an uncharacterized protein from Schizosaccharomyces pombe (strain 972 / ATCC 24843) (Fission yeast).